Reading from the N-terminus, the 413-residue chain is MDIYTYKKHILFKKCFLYFWKIKNVIKKKNTKKFNQIVLSLFLGGFSSFSILYCVQSILPVFSKQFCLTATESSLSLSAATATMSIGTLFIGPLSDRIGRKSIMSSSLLIAAVLTIICSISNNWTVIVFLRALTGLALSGVVAVAMTYIVEEVHPNSVSFCMGLYISGNTIGGCSGRILSSILAEYFSWHIAFIVIGFFSLMSSCLFLYFLPSSKNFYPISIDFNKFLKNFYLHLKNPTLLILFAIGFMLMGSFITIFNYISYRLMLSPFFLSSSNIGFLSIIYLTGVYSSPKAGILINQYNRSSILRIALLLMILGLLMTQYNEIFIIILGLVIFSSGFFASHSIASSWIGFHAKIAKVQATSLYLFFYYLGSSIFGTFGGFFWFYLKWIGISSFIIIILIFAILLSLKLKK.

The next 12 helical transmembrane spans lie at 42-62 (FLGG…LPVF), 75-95 (LSLS…GPLS), 109-129 (LIAA…VIVF), 133-153 (LTGL…VEEV), 157-179 (SVSF…GRIL), 191-211 (IAFI…LYFL), 238-258 (PTLL…ITIF), 265-285 (LMLS…IIYL), 304-324 (SSIL…TQYN), 326-346 (IFII…SHSI), 362-382 (ATSL…TFGG), and 383-403 (FFWF…ILIF).

This sequence belongs to the major facilitator superfamily.

The protein localises to the cell membrane. This is an uncharacterized protein from Buchnera aphidicola subsp. Schizaphis graminum (strain Sg).